Consider the following 417-residue polypeptide: Gamma-glutamyl phosphate reductase (417 aa).

The protein belongs to the gamma-glutamyl phosphate reductase family.

It is found in the cytoplasm. The enzyme catalyses L-glutamate 5-semialdehyde + phosphate + NADP(+) = L-glutamyl 5-phosphate + NADPH + H(+). It participates in amino-acid biosynthesis; L-proline biosynthesis; L-glutamate 5-semialdehyde from L-glutamate: step 2/2. Its function is as follows. Catalyzes the NADPH-dependent reduction of L-glutamate 5-phosphate into L-glutamate 5-semialdehyde and phosphate. The product spontaneously undergoes cyclization to form 1-pyrroline-5-carboxylate. The polypeptide is Gamma-glutamyl phosphate reductase (Idiomarina loihiensis (strain ATCC BAA-735 / DSM 15497 / L2-TR)).